A 655-amino-acid polypeptide reads, in one-letter code: Very long-chain specific acyl-CoA dehydrogenase, mitochondrial (655 aa).

A mitochondrion-targeting transit peptide spans Met-1–Tyr-40. A disordered region spans residues Arg-23 to Gly-42. A catalytic region spans residues Ala-41 to Lys-482. Lys-51 is subject to N6-acetyllysine. Lys-71 carries the post-translational modification N6-acetyllysine; alternate. Residue Lys-71 is modified to N6-succinyllysine; alternate. An N6-succinyllysine modification is found at Lys-195. Phe-214–Ser-223 is an FAD binding site. Cys-237 carries the post-translational modification S-nitrosocysteine. Lys-239 carries the post-translational modification N6-acetyllysine; alternate. At Lys-239 the chain carries N6-succinyllysine; alternate. Trp-249 to Ser-251 contributes to the FAD binding site. An N6-acetyllysine; alternate mark is found at Lys-276 and Lys-278. 2 positions are modified to N6-succinyllysine; alternate: Lys-276 and Lys-278. The residue at position 298 (Lys-298) is an N6-acetyllysine. Lys-331 carries the N6-acetyllysine; alternate modification. At Lys-331 the chain carries N6-succinyllysine; alternate. An N6-succinyllysine modification is found at Lys-372. Phe-461–Gly-463 serves as a coordination point for substrate. The Proton acceptor role is filled by Glu-462. Thr-464 to Asp-466 provides a ligand contact to FAD. Lys-482 carries the post-translational modification N6-acetyllysine; alternate. Lys-482 is modified (N6-succinyllysine; alternate). The segment at Glu-483–Gly-516 is membrane-anchoring. Phosphoserine occurs at positions 517 and 522. Residue Lys-550 is modified to N6-acetyllysine. At Lys-556 the chain carries N6-acetyllysine; alternate. At Lys-556 the chain carries N6-succinyllysine; alternate. Gln-562 contributes to the FAD binding site. Lys-639 is modified (N6-succinyllysine).

It belongs to the acyl-CoA dehydrogenase family. Homodimer. Homodimerizes after import into the mitochondrion. FAD serves as cofactor. S-nitrosylation at Cys-237 in liver improves catalytic efficiency. Predominantly expressed in heart and skeletal muscle (at protein level). Also detected in kidney and liver (at protein level).

The protein resides in the mitochondrion inner membrane. It catalyses the reaction a very-long-chain 2,3-saturated fatty acyl-CoA + oxidized [electron-transfer flavoprotein] + H(+) = a very-long-chain (2E)-enoyl-CoA + reduced [electron-transfer flavoprotein]. It carries out the reaction decanoyl-CoA + oxidized [electron-transfer flavoprotein] + H(+) = (2E)-decenoyl-CoA + reduced [electron-transfer flavoprotein]. The enzyme catalyses dodecanoyl-CoA + oxidized [electron-transfer flavoprotein] + H(+) = (2E)-dodecenoyl-CoA + reduced [electron-transfer flavoprotein]. The catalysed reaction is tetradecanoyl-CoA + oxidized [electron-transfer flavoprotein] + H(+) = (2E)-tetradecenoyl-CoA + reduced [electron-transfer flavoprotein]. It catalyses the reaction oxidized [electron-transfer flavoprotein] + hexadecanoyl-CoA + H(+) = (2E)-hexadecenoyl-CoA + reduced [electron-transfer flavoprotein]. It carries out the reaction octadecanoyl-CoA + oxidized [electron-transfer flavoprotein] + H(+) = (2E)-octadecenoyl-CoA + reduced [electron-transfer flavoprotein]. The enzyme catalyses eicosanoyl-CoA + oxidized [electron-transfer flavoprotein] + H(+) = (2E)-eicosenoyl-CoA + reduced [electron-transfer flavoprotein]. The catalysed reaction is docosanoyl-CoA + oxidized [electron-transfer flavoprotein] + H(+) = (2E)-docosenoyl-CoA + reduced [electron-transfer flavoprotein]. It catalyses the reaction tetracosanoyl-CoA + oxidized [electron-transfer flavoprotein] + H(+) = (2E)-tetracosenoyl-CoA + reduced [electron-transfer flavoprotein]. It carries out the reaction (9Z)-hexadecenoyl-CoA + oxidized [electron-transfer flavoprotein] + H(+) = (2E,9Z)-hexadecadienoyl-CoA + reduced [electron-transfer flavoprotein]. The enzyme catalyses oxidized [electron-transfer flavoprotein] + (9Z)-octadecenoyl-CoA + H(+) = (2E,9Z)-octadecadienoyl-CoA + reduced [electron-transfer flavoprotein]. The protein operates within lipid metabolism; mitochondrial fatty acid beta-oxidation. Very long-chain specific acyl-CoA dehydrogenase is one of the acyl-CoA dehydrogenases that catalyze the first step of mitochondrial fatty acid beta-oxidation, an aerobic process breaking down fatty acids into acetyl-CoA and allowing the production of energy from fats. The first step of fatty acid beta-oxidation consists in the removal of one hydrogen from C-2 and C-3 of the straight-chain fatty acyl-CoA thioester, resulting in the formation of trans-2-enoyl-CoA. Among the different mitochondrial acyl-CoA dehydrogenases, very long-chain specific acyl-CoA dehydrogenase acts specifically on acyl-CoAs with saturated 12 to 24 carbons long primary chains. The chain is Very long-chain specific acyl-CoA dehydrogenase, mitochondrial from Homo sapiens (Human).